A 374-amino-acid polypeptide reads, in one-letter code: Resuscitation-promoting factor Rpf2 (374 aa).

Positions M1–A40 are cleaved as a signal peptide. The region spanning I210–T290 is the G5 domain. Residues P228 to K252 are disordered.

It belongs to the transglycosylase family. Rpf subfamily. Glycosylated; by Pmt, by at least mannose and galactose. Other unidentified sugars may also be present. In terms of processing, may be subject to proteolytic cleavage as multiple shorter forms are detected in gels. Post-translationally, at least 3 non-glycosylated protein isoforms of 35, 40 and 42 kDa are seen in gels.

The protein resides in the secreted. It localises to the cell surface. Factor that stimulates resuscitation of dormant cells. Has peptidoglycan (PG) hydrolytic activity. Active in the pM concentration range. Has little to no effect on actively-growing cells. PG fragments could either directly activate the resuscitation pathway of dormant bacteria or serve as a substrate for endogenous Rpf, resulting in low molecular weight products with resuscitation activity. This is Resuscitation-promoting factor Rpf2 (rpf2) from Corynebacterium glutamicum (strain ATCC 13032 / DSM 20300 / JCM 1318 / BCRC 11384 / CCUG 27702 / LMG 3730 / NBRC 12168 / NCIMB 10025 / NRRL B-2784 / 534).